The primary structure comprises 352 residues: Holliday junction branch migration complex subunit RuvB (352 aa).

Positions 1 to 182 are large ATPase domain (RuvB-L); the sequence is MRIELLNTPP…FGINSRFDYY (182 aa). ATP contacts are provided by residues I21, R22, G63, K66, T67, T68, 129-131, R172, Y182, and R219; that span reads EDF. T67 is a Mg(2+) binding site. Residues 183-253 are small ATPAse domain (RuvB-S); it reads EPELLTRIII…IAMKTLECLE (71 aa). Residues 256–352 form a head domain (RuvB-H) region; it reads EEGLDEMDKK…LPLFDESEAD (97 aa). 3 residues coordinate DNA: R292, R311, and R316.

The protein belongs to the RuvB family. In terms of assembly, homohexamer. Forms an RuvA(8)-RuvB(12)-Holliday junction (HJ) complex. HJ DNA is sandwiched between 2 RuvA tetramers; dsDNA enters through RuvA and exits via RuvB. An RuvB hexamer assembles on each DNA strand where it exits the tetramer. Each RuvB hexamer is contacted by two RuvA subunits (via domain III) on 2 adjacent RuvB subunits; this complex drives branch migration. In the full resolvosome a probable DNA-RuvA(4)-RuvB(12)-RuvC(2) complex forms which resolves the HJ.

It localises to the cytoplasm. It carries out the reaction ATP + H2O = ADP + phosphate + H(+). Its function is as follows. The RuvA-RuvB-RuvC complex processes Holliday junction (HJ) DNA during genetic recombination and DNA repair, while the RuvA-RuvB complex plays an important role in the rescue of blocked DNA replication forks via replication fork reversal (RFR). RuvA specifically binds to HJ cruciform DNA, conferring on it an open structure. The RuvB hexamer acts as an ATP-dependent pump, pulling dsDNA into and through the RuvAB complex. RuvB forms 2 homohexamers on either side of HJ DNA bound by 1 or 2 RuvA tetramers; 4 subunits per hexamer contact DNA at a time. Coordinated motions by a converter formed by DNA-disengaged RuvB subunits stimulates ATP hydrolysis and nucleotide exchange. Immobilization of the converter enables RuvB to convert the ATP-contained energy into a lever motion, pulling 2 nucleotides of DNA out of the RuvA tetramer per ATP hydrolyzed, thus driving DNA branch migration. The RuvB motors rotate together with the DNA substrate, which together with the progressing nucleotide cycle form the mechanistic basis for DNA recombination by continuous HJ branch migration. Branch migration allows RuvC to scan DNA until it finds its consensus sequence, where it cleaves and resolves cruciform DNA. This chain is Holliday junction branch migration complex subunit RuvB, found in Chlorobium chlorochromatii (strain CaD3).